The chain runs to 703 residues: Hyperosmolality-gated Ca2+ permeable channel 2.3 (703 aa).

Residues 1 to 3 (MLL) lie on the Extracellular side of the membrane. A helical transmembrane segment spans residues 4–26 (SALLTSVGINLGLCFLFFTLYSI). The Cytoplasmic portion of the chain corresponds to 27 to 81 (LRKQPSNVTVYGPRLVKKDGKSQQSNEFNLERLLPTAGWVKRALEPTNDEILSNL). A helical transmembrane segment spans residues 82 to 115 (GLDALVFIRVFVFSIRVFSFASVVGIFILLPVNY). At 116-143 (MGTEFEEFFDLPKKSMDNFSISNVNDGS) the chain is on the extracellular side. The chain crosses the membrane as a helical span at residues 144 to 165 (NKLWIHFCAIYIFTAVVCSLLY). Over 166-355 (YEHKYILTKR…TASFVRRWIS (190 aa)) the chain is Cytoplasmic. A coiled-coil region spans residues 228–300 (RTDKLKVLMN…LKQSLLAGEE (73 aa)). The helical transmembrane segment at 356–382 (NVVVLVAFVALLILYIVPVVLVQGLAN) threads the bilayer. Residues 383-410 (LHQLETWFPFLKGILNMKIVSQVITGYL) are Extracellular-facing. A helical transmembrane segment spans residues 411-432 (PSLIFQLFLLIVPPIMLLLSSM). Topologically, residues 433–436 (QGFI) are cytoplasmic. Residues 437-463 (SHSQIEKSACIKLLIFTVWNSFFANVL) traverse the membrane as a helical segment. Residues 464–489 (SGSALYRVNVFLEPKTIPRVLAAAVP) lie on the Extracellular side of the membrane. Residues 490–512 (AQASFFVSYVVTSGWTGLSSEIL) traverse the membrane as a helical segment. Topologically, residues 513-540 (RLVPLLWSFITKLFGKEDDKEFEVPSTP) are cytoplasmic. The chain crosses the membrane as a helical span at residues 541–561 (FCQEIPRILFFGLLGITYFFL). Position 562 (serine 562) is a topological domain, extracellular. Residues 563-586 (PLILPFLLVYYCLGYIIYRNQLLN) traverse the membrane as a helical segment. Residues 587-598 (VYAAKYETGGKF) lie on the Cytoplasmic side of the membrane. A helical membrane pass occupies residues 599-623 (WPIVHSYTIFSLVLMHIIAVGLFGL). At 624 to 626 (KEL) the chain is on the extracellular side. The helical transmembrane segment at 627–655 (PVASSLTIPLPVLTVLFSIYCQRRFLPNF) threads the bilayer. At 656–703 (KSYPTQCLVNKDKADEREQNMSEFYSELVVAYRDPALSASQDSRDISP) the chain is on the cytoplasmic side.

Belongs to the CSC1 (TC 1.A.17) family. In terms of assembly, homodimer.

The protein resides in the membrane. Its function is as follows. Acts as an osmosensitive calcium-permeable cation channel. This chain is Hyperosmolality-gated Ca2+ permeable channel 2.3, found in Arabidopsis thaliana (Mouse-ear cress).